The sequence spans 354 residues: Histidinol-phosphate aminotransferase (354 aa).

Lys-210 bears the N6-(pyridoxal phosphate)lysine mark.

Belongs to the class-II pyridoxal-phosphate-dependent aminotransferase family. Histidinol-phosphate aminotransferase subfamily. In terms of assembly, homodimer. The cofactor is pyridoxal 5'-phosphate.

It catalyses the reaction L-histidinol phosphate + 2-oxoglutarate = 3-(imidazol-4-yl)-2-oxopropyl phosphate + L-glutamate. It participates in amino-acid biosynthesis; L-histidine biosynthesis; L-histidine from 5-phospho-alpha-D-ribose 1-diphosphate: step 7/9. The chain is Histidinol-phosphate aminotransferase from Clostridium botulinum (strain ATCC 19397 / Type A).